The chain runs to 216 residues: Imidazole glycerol phosphate synthase subunit HisH (216 aa).

Residues 5-213 (RLAVIDYDAG…VEFVARRLPA (209 aa)) enclose the Glutamine amidotransferase type-1 domain. Catalysis depends on C83, which acts as the Nucleophile. Active-site residues include H188 and E190.

Heterodimer of HisH and HisF.

Its subcellular location is the cytoplasm. It carries out the reaction 5-[(5-phospho-1-deoxy-D-ribulos-1-ylimino)methylamino]-1-(5-phospho-beta-D-ribosyl)imidazole-4-carboxamide + L-glutamine = D-erythro-1-(imidazol-4-yl)glycerol 3-phosphate + 5-amino-1-(5-phospho-beta-D-ribosyl)imidazole-4-carboxamide + L-glutamate + H(+). The enzyme catalyses L-glutamine + H2O = L-glutamate + NH4(+). It functions in the pathway amino-acid biosynthesis; L-histidine biosynthesis; L-histidine from 5-phospho-alpha-D-ribose 1-diphosphate: step 5/9. Its function is as follows. IGPS catalyzes the conversion of PRFAR and glutamine to IGP, AICAR and glutamate. The HisH subunit catalyzes the hydrolysis of glutamine to glutamate and ammonia as part of the synthesis of IGP and AICAR. The resulting ammonia molecule is channeled to the active site of HisF. This chain is Imidazole glycerol phosphate synthase subunit HisH, found in Synechococcus sp. (strain JA-3-3Ab) (Cyanobacteria bacterium Yellowstone A-Prime).